The sequence spans 73 residues: Large ribosomal subunit protein bL28 (73 aa).

This sequence belongs to the bacterial ribosomal protein bL28 family.

This chain is Large ribosomal subunit protein bL28, found in Buchnera aphidicola subsp. Cinara cedri (strain Cc).